The following is a 432-amino-acid chain: Glutamate-1-semialdehyde 2,1-aminomutase (432 aa).

Residue K270 is modified to N6-(pyridoxal phosphate)lysine.

This sequence belongs to the class-III pyridoxal-phosphate-dependent aminotransferase family. HemL subfamily. Homodimer. Pyridoxal 5'-phosphate is required as a cofactor.

The protein resides in the cytoplasm. It catalyses the reaction (S)-4-amino-5-oxopentanoate = 5-aminolevulinate. The protein operates within porphyrin-containing compound metabolism; protoporphyrin-IX biosynthesis; 5-aminolevulinate from L-glutamyl-tRNA(Glu): step 2/2. In Acinetobacter baylyi (strain ATCC 33305 / BD413 / ADP1), this protein is Glutamate-1-semialdehyde 2,1-aminomutase.